A 474-amino-acid chain; its full sequence is Coronin-1C (474 aa).

WD repeat units follow at residues 78-118, 128-168, 172-202, 215-249, and 263-303; these read GHTG…LTLS, GHSK…ALIN, MHSDMIYNVSWSRNGSLICTASKDKKVRVID, AHEGARPMRAIFLADGNVFTTGFSRMSERQLALWN, and DTSN…PYVH. Residues 435–474 adopt a coiled-coil conformation; it reads VQNEAKLDEILKEIKSIKETICSQDERISKLEQQLAKMAA. The residue at position 446 (K446) is an N6-acetyllysine.

The protein belongs to the WD repeat coronin family. Homotrimer. Binds F-actin. Interacts with RCC2. Interacts preferentially with nucleotide-free and GDP-bound RAC1. Interacts with VIM (via head domain). Interacts with MICAL2; this interaction recruits MICAL2 to the actin filaments. In terms of tissue distribution, detected in skeletal muscle (at protein level). Detected in fibroblasts (at protein level). Ubiquitous.

It localises to the cell membrane. The protein resides in the cell projection. The protein localises to the lamellipodium. It is found in the ruffle membrane. Its subcellular location is the cytoplasm. It localises to the cytoskeleton. The protein resides in the cell cortex. The protein localises to the endosome membrane. Plays a role in directed cell migration by regulating the activation and subcellular location of RAC1. Increases the presence of activated RAC1 at the leading edge of migrating cells. Required for normal organization of the cytoskeleton, including the actin cytoskeleton, microtubules and the vimentin intermediate filaments. Required for normal cell proliferation, cell migration, and normal formation of lamellipodia. Plays a role in endoplasmic reticulum-associated endosome fission: localizes to endosome membrane tubules and promotes recruitment of TMCC1, leading to recruitment of the endoplasmic reticulum to endosome tubules for fission. Endosome membrane fission of early and late endosomes is essential to separate regions destined for lysosomal degradation from carriers to be recycled to the plasma membrane. Required for normal distribution of mitochondria within cells. The sequence is that of Coronin-1C (Coro1c) from Mus musculus (Mouse).